Here is a 244-residue protein sequence, read N- to C-terminus: Meiotic drive suppressor wtf2 (244 aa).

Positions M1 to S10 are enriched in polar residues. The interval M1–D68 is disordered. The segment covering E17 to P30 has biased composition (basic and acidic residues). Helical transmembrane passes span F73–C93, W110–F130, W149–P169, and L183–A203.

This sequence belongs to the WTF family. As to quaternary structure, homomer. Interacts with other proteins that exhibit high sequence similarity.

The protein resides in the spore membrane. It localises to the vacuole membrane. Acts as a suppressor component of the dual wtf meiotic drive system, and can suppress but not confer meiotic drive by compatible poisons. Wtf meiotic drive systems promote unequal transmission of alleles from the parental zygote to progeny spores by encoding a poison and an antidote from the same locus; the poison is trans-acting and forms toxic aggregates in all spores within an ascus, wherease the antidote is spore-specific and targets aggregates for degradation by the vacuole. Meiotic drive by wtf systems therefore lead to poisoning of all progeny that do not inherit the dual poison/antidote allele, or express a compatible antidote. The protein is Meiotic drive suppressor wtf2 of Schizosaccharomyces kambucha (Fission yeast).